The primary structure comprises 231 residues: 7-cyano-7-deazaguanine synthase (231 aa).

Phenylalanine 8 to leucine 18 contributes to the ATP binding site. 4 residues coordinate Zn(2+): cysteine 188, cysteine 197, cysteine 200, and cysteine 203.

It belongs to the QueC family. Requires Zn(2+) as cofactor.

It catalyses the reaction 7-carboxy-7-deazaguanine + NH4(+) + ATP = 7-cyano-7-deazaguanine + ADP + phosphate + H2O + H(+). The protein operates within purine metabolism; 7-cyano-7-deazaguanine biosynthesis. Functionally, catalyzes the ATP-dependent conversion of 7-carboxy-7-deazaguanine (CDG) to 7-cyano-7-deazaguanine (preQ(0)). The chain is 7-cyano-7-deazaguanine synthase from Escherichia coli (strain SE11).